Here is a 42-residue protein sequence, read N- to C-terminus: Perlinhibin-related protein (42 aa).

In terms of processing, contains four disulfide bonds.

In terms of biological role, inhibitor of shell growth. The protein is Perlinhibin-related protein of Haliotis laevigata (Smooth Australian abalone).